We begin with the raw amino-acid sequence, 317 residues long: Glutaminase (317 aa).

Substrate-binding residues include Ser-67, Asn-118, Glu-162, Asn-169, Tyr-193, Tyr-245, and Val-263.

The protein belongs to the glutaminase family. Homotetramer.

It carries out the reaction L-glutamine + H2O = L-glutamate + NH4(+). This chain is Glutaminase, found in Brucella canis (strain ATCC 23365 / NCTC 10854 / RM-666).